The sequence spans 876 residues: Leucine--tRNA ligase (876 aa).

The short motif at 43–53 is the 'HIGH' region element; sequence PYPSGRIHMGH. The short motif at 632–636 is the 'KMSKS' region element; it reads KMSKS. K635 is an ATP binding site.

The protein belongs to the class-I aminoacyl-tRNA synthetase family.

Its subcellular location is the cytoplasm. The enzyme catalyses tRNA(Leu) + L-leucine + ATP = L-leucyl-tRNA(Leu) + AMP + diphosphate. In Sinorhizobium fredii (strain NBRC 101917 / NGR234), this protein is Leucine--tRNA ligase.